A 428-amino-acid chain; its full sequence is Adenylosuccinate synthetase (428 aa).

GTP-binding positions include Gly-12–Lys-18 and Gly-40–Thr-42. Asp-13 (proton acceptor) is an active-site residue. Asp-13 and Gly-40 together coordinate Mg(2+). IMP-binding positions include Asp-13 to Lys-16, Asn-38 to His-41, Thr-128, Arg-142, Gln-223, Thr-238, and Arg-302. The active-site Proton donor is the His-41. Position 298–304 (Thr-298–Arg-304) interacts with substrate. GTP is bound by residues Arg-304, Ser-330–Asp-332, and Ser-412–Gly-414.

The protein belongs to the adenylosuccinate synthetase family. Homodimer. Mg(2+) is required as a cofactor.

It localises to the cytoplasm. The catalysed reaction is IMP + L-aspartate + GTP = N(6)-(1,2-dicarboxyethyl)-AMP + GDP + phosphate + 2 H(+). It participates in purine metabolism; AMP biosynthesis via de novo pathway; AMP from IMP: step 1/2. In terms of biological role, plays an important role in the de novo pathway of purine nucleotide biosynthesis. Catalyzes the first committed step in the biosynthesis of AMP from IMP. The sequence is that of Adenylosuccinate synthetase from Streptococcus pneumoniae serotype 2 (strain D39 / NCTC 7466).